Consider the following 140-residue polypeptide: MLMPKKVKYRKQMKGRMSGTPQRGVSLAFGEFGLQATECGWLDSRQIEAARIAMNRYIKRGGKIWIRIFPDKPLTAKPAETRMGKGKGSPDSWVCVIKPGRILYEMEGVTEEIAREAFRLAAHKLPIPTKFTSRKDAHEG.

Belongs to the universal ribosomal protein uL16 family. Part of the 50S ribosomal subunit.

Binds 23S rRNA and is also seen to make contacts with the A and possibly P site tRNAs. This is Large ribosomal subunit protein uL16 from Geotalea uraniireducens (strain Rf4) (Geobacter uraniireducens).